The primary structure comprises 296 residues: Nucleotide-binding protein M6_Spy0559 (296 aa).

13-20 (GMSGAGKT) serves as a coordination point for ATP. 63 to 66 (DMRS) contributes to the GTP binding site.

This sequence belongs to the RapZ-like family.

In terms of biological role, displays ATPase and GTPase activities. This is Nucleotide-binding protein M6_Spy0559 from Streptococcus pyogenes serotype M6 (strain ATCC BAA-946 / MGAS10394).